The following is a 413-amino-acid chain: Serine hydroxymethyltransferase (413 aa).

Residues Leu117 and 121–123 (GHL) each bind (6S)-5,6,7,8-tetrahydrofolate. Lys226 carries the post-translational modification N6-(pyridoxal phosphate)lysine. (6S)-5,6,7,8-tetrahydrofolate-binding positions include Glu239 and 349–351 (SPF).

It belongs to the SHMT family. In terms of assembly, homodimer. It depends on pyridoxal 5'-phosphate as a cofactor.

It localises to the cytoplasm. The catalysed reaction is (6R)-5,10-methylene-5,6,7,8-tetrahydrofolate + glycine + H2O = (6S)-5,6,7,8-tetrahydrofolate + L-serine. It functions in the pathway one-carbon metabolism; tetrahydrofolate interconversion. Its pathway is amino-acid biosynthesis; glycine biosynthesis; glycine from L-serine: step 1/1. Catalyzes the reversible interconversion of serine and glycine with tetrahydrofolate (THF) serving as the one-carbon carrier. This reaction serves as the major source of one-carbon groups required for the biosynthesis of purines, thymidylate, methionine, and other important biomolecules. Also exhibits THF-independent aldolase activity toward beta-hydroxyamino acids, producing glycine and aldehydes, via a retro-aldol mechanism. The sequence is that of Serine hydroxymethyltransferase from Bacillus cereus (strain AH187).